A 72-amino-acid chain; its full sequence is Translation initiation factor IF-1 (72 aa).

Positions 1–72 constitute an S1-like domain; it reads MAKDDVIEVE…TRGRITYRYK (72 aa). Position 60 is a phosphotyrosine (Tyr-60).

Belongs to the IF-1 family. Component of the 30S ribosomal translation pre-initiation complex which assembles on the 30S ribosome in the order IF-2 and IF-3, IF-1 and N-formylmethionyl-tRNA(fMet); mRNA recruitment can occur at any time during PIC assembly.

It localises to the cytoplasm. In terms of biological role, one of the essential components for the initiation of protein synthesis. Stabilizes the binding of IF-2 and IF-3 on the 30S subunit to which N-formylmethionyl-tRNA(fMet) subsequently binds. Helps modulate mRNA selection, yielding the 30S pre-initiation complex (PIC). Upon addition of the 50S ribosomal subunit IF-1, IF-2 and IF-3 are released leaving the mature 70S translation initiation complex. The protein is Translation initiation factor IF-1 of Bacillus licheniformis (strain ATCC 14580 / DSM 13 / JCM 2505 / CCUG 7422 / NBRC 12200 / NCIMB 9375 / NCTC 10341 / NRRL NRS-1264 / Gibson 46).